We begin with the raw amino-acid sequence, 325 residues long: Structure-specific endonuclease subunit SLX1 (325 aa).

The GIY-YIG domain occupies 10 to 92 (ALYTVYILRS…NNPHLSMHIP (83 aa)). The SLX1-type zinc-finger motif lies at 230-284 (CVVCREEMKSGEGLHAVCTHEGCDGVGHISCWSRSFLKNNDTGSILPVQGQCPMC).

It belongs to the SLX1 family. In terms of assembly, forms a heterodimer with SLX4. A divalent metal cation is required as a cofactor.

Its subcellular location is the nucleus. Catalytic subunit of the SLX1-SLX4 structure-specific endonuclease that resolves DNA secondary structures generated during DNA repair and recombination. Has endonuclease activity towards branched DNA substrates, introducing single-strand cuts in duplex DNA close to junctions with ss-DNA. The protein is Structure-specific endonuclease subunit SLX1 of Chaetomium globosum (strain ATCC 6205 / CBS 148.51 / DSM 1962 / NBRC 6347 / NRRL 1970) (Soil fungus).